The following is a 435-amino-acid chain: 3-phosphoshikimate 1-carboxyvinyltransferase (435 aa).

3 residues coordinate 3-phosphoshikimate: Lys-23, Ser-24, and Arg-28. Lys-23 serves as a coordination point for phosphoenolpyruvate. Gly-97 and Arg-125 together coordinate phosphoenolpyruvate. The 3-phosphoshikimate site is built by Ser-170, Ser-171, Gln-172, Ser-198, Asp-314, Asn-338, and Lys-342. Gln-172 serves as a coordination point for phosphoenolpyruvate. Asp-314 functions as the Proton acceptor in the catalytic mechanism. Positions 346, 388, and 413 each coordinate phosphoenolpyruvate.

The protein belongs to the EPSP synthase family. In terms of assembly, monomer.

It is found in the cytoplasm. The enzyme catalyses 3-phosphoshikimate + phosphoenolpyruvate = 5-O-(1-carboxyvinyl)-3-phosphoshikimate + phosphate. The protein operates within metabolic intermediate biosynthesis; chorismate biosynthesis; chorismate from D-erythrose 4-phosphate and phosphoenolpyruvate: step 6/7. Functionally, catalyzes the transfer of the enolpyruvyl moiety of phosphoenolpyruvate (PEP) to the 5-hydroxyl of shikimate-3-phosphate (S3P) to produce enolpyruvyl shikimate-3-phosphate and inorganic phosphate. This chain is 3-phosphoshikimate 1-carboxyvinyltransferase, found in Sodalis glossinidius (strain morsitans).